A 628-amino-acid chain; its full sequence is Exonuclease V, mitochondrial (628 aa).

A mitochondrion-targeting transit peptide spans 1–21 (MSRFWHFKKFYFTSCYSMQRM). Positions 37 to 58 (TSEHEQVQSISKEESRSLSSND) are disordered. Residues 38–52 (SEHEQVQSISKEESR) are compositionally biased toward basic and acidic residues. Cys164, Cys586, Cys589, and Cys595 together coordinate [4Fe-4S] cluster.

This sequence belongs to the EXO5 family. In terms of assembly, monomer. Mg(2+) serves as cofactor. Requires [4Fe-4S] cluster as cofactor.

The protein localises to the mitochondrion. In terms of biological role, single strand DNA specific 5' exonuclease involved in mitochondrial DNA replication and recombination. Releases dinucleotides as main products of catalysis. Has the capacity to slide across 5'double-stranded DNA or 5'RNA sequences and resumes cutting two nucleotides downstream of the double-stranded-to-single-stranded junction or RNA-to-DNA junction, respectively. The protein is Exonuclease V, mitochondrial (DEM1) of Candida albicans (strain SC5314 / ATCC MYA-2876) (Yeast).